Consider the following 205-residue polypeptide: Guanylate kinase (205 aa).

Residues 18-196 (PKLFTISAPA…AYQVLRSIFI (179 aa)) enclose the Guanylate kinase-like domain. 25–32 (APAGAGKT) lines the ATP pocket.

The protein belongs to the guanylate kinase family.

The protein localises to the cytoplasm. It catalyses the reaction GMP + ATP = GDP + ADP. Functionally, essential for recycling GMP and indirectly, cGMP. The protein is Guanylate kinase (gmk) of Chlamydia muridarum (strain MoPn / Nigg).